The sequence spans 159 residues: NAD(P)H-quinone oxidoreductase subunit J, chloroplastic (159 aa).

It belongs to the complex I 30 kDa subunit family. As to quaternary structure, NDH is composed of at least 16 different subunits, 5 of which are encoded in the nucleus.

It localises to the plastid. The protein resides in the chloroplast thylakoid membrane. The enzyme catalyses a plastoquinone + NADH + (n+1) H(+)(in) = a plastoquinol + NAD(+) + n H(+)(out). It catalyses the reaction a plastoquinone + NADPH + (n+1) H(+)(in) = a plastoquinol + NADP(+) + n H(+)(out). Its function is as follows. NDH shuttles electrons from NAD(P)H:plastoquinone, via FMN and iron-sulfur (Fe-S) centers, to quinones in the photosynthetic chain and possibly in a chloroplast respiratory chain. The immediate electron acceptor for the enzyme in this species is believed to be plastoquinone. Couples the redox reaction to proton translocation, and thus conserves the redox energy in a proton gradient. This chain is NAD(P)H-quinone oxidoreductase subunit J, chloroplastic, found in Triticum aestivum (Wheat).